We begin with the raw amino-acid sequence, 338 residues long: Lumican (338 aa).

Residues 1–18 (MNVCAFSLALALVGSVSG) form the signal peptide. The residue at position 19 (glutamine 19) is a Pyrrolidone carboxylic acid. Residues tyrosine 20, tyrosine 21, tyrosine 23, and tyrosine 30 each carry the sulfotyrosine modification. One can recognise an LRRNT domain in the interval 28-66 (FMYGQISPNCAPECNCPHSYPTAMYCDDLKLKSVPMVPP). LRR repeat units lie at residues 67–88 (GIKY…AFEN), 91–114 (DLQW…VFSK), 117–137 (QLKK…PLPK), 138–159 (SLQD…DGLV), 160–181 (NLTF…ASLK), 185–205 (SLEY…GLPT), 206–227 (SLLT…YFKR), and 230–250 (GLQY…PGNS). An N-linked (GlcNAc...) (keratan sulfate) asparagine glycan is attached at asparagine 88. Residue asparagine 127 is glycosylated (N-linked (GlcNAc...) (keratan sulfate) asparagine). Asparagine 160 is a glycosylation site (N-linked (GlcNAc...) (keratan sulfate) asparagine). Residue asparagine 252 is glycosylated (N-linked (GlcNAc...) (keratan sulfate) asparagine). LRR repeat units follow at residues 255–276 (SLLE…NENL) and 277–296 (ENYY…SFCK). A disulfide bond links cysteine 295 and cysteine 328. A Phosphoserine modification is found at serine 304. The LRR 11 repeat unit spans residues 305–326 (KIKHLRLDGNPLTQSSLPPDMY).

The protein belongs to the small leucine-rich proteoglycan (SLRP) family. SLRP class II subfamily. Binds to laminin. In terms of processing, contains keratan sulfate. Cys-37, Cys-41, Cys-43 and Cys-53 are involved in disulfide bonds. In terms of tissue distribution, cornea and other tissues.

It localises to the secreted. Its subcellular location is the extracellular space. It is found in the extracellular matrix. In Mus musculus (Mouse), this protein is Lumican (Lum).